Here is a 475-residue protein sequence, read N- to C-terminus: ATP synthase subunit beta (475 aa).

161–168 (GGAGVGKT) is a binding site for ATP.

Belongs to the ATPase alpha/beta chains family. F-type ATPases have 2 components, CF(1) - the catalytic core - and CF(0) - the membrane proton channel. CF(1) has five subunits: alpha(3), beta(3), gamma(1), delta(1), epsilon(1). CF(0) has three main subunits: a(1), b(2) and c(9-12). The alpha and beta chains form an alternating ring which encloses part of the gamma chain. CF(1) is attached to CF(0) by a central stalk formed by the gamma and epsilon chains, while a peripheral stalk is formed by the delta and b chains.

It localises to the cell membrane. The enzyme catalyses ATP + H2O + 4 H(+)(in) = ADP + phosphate + 5 H(+)(out). Its function is as follows. Produces ATP from ADP in the presence of a proton gradient across the membrane. The catalytic sites are hosted primarily by the beta subunits. The chain is ATP synthase subunit beta from Mycoplasma mycoides subsp. mycoides SC (strain CCUG 32753 / NCTC 10114 / PG1).